A 483-amino-acid polypeptide reads, in one-letter code: Probable cytosol aminopeptidase (483 aa).

The Mn(2+) site is built by lysine 245 and aspartate 250. Residue lysine 257 is part of the active site. Mn(2+) is bound by residues aspartate 268, aspartate 327, and glutamate 329. Arginine 331 is a catalytic residue.

Belongs to the peptidase M17 family. Mn(2+) is required as a cofactor.

The protein resides in the cytoplasm. The enzyme catalyses Release of an N-terminal amino acid, Xaa-|-Yaa-, in which Xaa is preferably Leu, but may be other amino acids including Pro although not Arg or Lys, and Yaa may be Pro. Amino acid amides and methyl esters are also readily hydrolyzed, but rates on arylamides are exceedingly low.. It carries out the reaction Release of an N-terminal amino acid, preferentially leucine, but not glutamic or aspartic acids.. Functionally, presumably involved in the processing and regular turnover of intracellular proteins. Catalyzes the removal of unsubstituted N-terminal amino acids from various peptides. This Wolinella succinogenes (strain ATCC 29543 / DSM 1740 / CCUG 13145 / JCM 31913 / LMG 7466 / NCTC 11488 / FDC 602W) (Vibrio succinogenes) protein is Probable cytosol aminopeptidase.